Consider the following 439-residue polypeptide: Homeobox protein ceh-32 (439 aa).

The homeobox DNA-binding region spans 183–243; the sequence is WDGEQKTHCF…KNRRQRDRAA (61 aa). 3 disordered regions span residues 253–293, 344–365, and 379–439; these read GVEL…SHIP, EEEN…KKRS, and VSPS…SQSE. Acidic residues-rich tracts occupy residues 264 to 274 and 344 to 358; these read SDSDDDFEDSM and EEEN…EADI. Polar residues predominate over residues 379 to 392; it reads VSPSQCSPCSNESL. A compositionally biased stretch (basic and acidic residues) spans 398 to 428; sequence VKTEEVKKEDDEAAEEDSRSVKSETSEDPKH.

It belongs to the SIX/Sine oculis homeobox family. In terms of assembly, interacts with gmn-1. Expressed in the posterior gonad. Expressed in some cells in the head that are probably neurons. Expressed in the dorsal and ventral neuron RMD pair and the inner labial neuron class IL1. Not expressed in BAG neurons.

The protein resides in the nucleus. In terms of biological role, transcription factor which binds a motif with the core sequence 5'-GTATCA-3'. Plays a role in head morphogenesis. Involved in embryonic development. Required for cell specification of the RIA interneurons. May cooperate with the transcription factor vab-3 and phosphatase eya-1 to repress transcription factor ets-5 expression in non BAG neuronal cells. The sequence is that of Homeobox protein ceh-32 from Caenorhabditis elegans.